A 262-amino-acid chain; its full sequence is MQSSSLDPVASERLSHAEKSFTSDLSINEFALLHGAGFEPIELVMGVSVYHVGFQFSGMRQQQELGVLTEATYRARWNAMARMQAEADALKADGIVGVRLNWRHHGEGGEHLEFMAVGTAVRYTAKPGAFRRPNGQAFSSHLSGQDMVTLLRSGFAPVAFVMGNCVFHIAVQGFMQTLRQIGRNMEMPQWTQGNYQARELAMSRMQSEAERDGATGVVGVHFAISNYAWGVHTVEFYTAGTAVRRTGSGETITPSFVLPMDS.

Belongs to the UPF0145 family.

It localises to the encapsulin nanocompartment. Cargo protein of a type 1 encapsulin nanocompartment possibly involved in protection against oxidative stress. The sequence is that of Encapsulin nanocompartment protein Rv1762c from Mycobacterium tuberculosis (strain ATCC 25618 / H37Rv).